Reading from the N-terminus, the 100-residue chain is DNA-directed RNA polymerase subunit Rpo11 (100 aa).

It belongs to the archaeal Rpo11/eukaryotic RPB11/RPC19 RNA polymerase subunit family. Part of the RNA polymerase complex.

The protein resides in the cytoplasm. It carries out the reaction RNA(n) + a ribonucleoside 5'-triphosphate = RNA(n+1) + diphosphate. Its function is as follows. DNA-dependent RNA polymerase (RNAP) catalyzes the transcription of DNA into RNA using the four ribonucleoside triphosphates as substrates. The chain is DNA-directed RNA polymerase subunit Rpo11 from Picrophilus torridus (strain ATCC 700027 / DSM 9790 / JCM 10055 / NBRC 100828 / KAW 2/3).